The chain runs to 2303 residues: Adenomatous polyposis coli protein 2 (2303 aa).

The stretch at 8–59 (YEQLVRQVEALKAENSHLRQELRDNSSHLSKLETETSGMKEVLKHLQGKLEQ) forms a coiled coil. Disordered regions lie at residues 94-120 (PTLGPEPAARTPEGSPVHGSGPSKDSF) and 247-270 (VPVDEDPETEVPTHPEDGTPQPGN). 6 ARM repeats span residues 302-341 (PESCVAMRRSGCLPLLLQILHGTEAAAGGRAGAPGAPGAK), 479-518 (ANKATLCARRGCMEAIVAQLASDSEELHQVVSSILRNLSW), 522-562 (INSK…NLSA), 566-609 (ENKA…NVSS), 615-654 (EDYRQVLRDHNCLQTLLQHLTSHSLTIVSNACGTLWNLSA), and 657-696 (ARDQELLWDLGAVGMLRNLVHSKHKMIAMGSAAALRNLLA). 2 disordered regions span residues 744–764 (KQGPPAAEAATKKPLPPLRHL) and 816–835 (LARTPPTRRGGKEAEKDTSG). Basic and acidic residues predominate over residues 825–834 (GGKEAEKDTS). Positions 840 to 864 (AAKAKAKLALAVARIDQLVEDISAL) form a coiled coil. 4 disordered regions span residues 867 to 908 (SSDD…AGSR), 953 to 986 (RREDPRCGQPRPSRLDLDLPGCQAEPPAREATSA), 1069 to 1152 (RCSS…ENYV), and 1173 to 1228 (SPSI…EATQ). Residues 869–878 (DDSFSLSSGD) show a composition bias toward low complexity. Copy 1 of the repeat occupies 1058 to 1077 (LAAQEGPLSLSRCSSLSSLS). Positions 1058 to 1587 (LAAQEGPLSL…SLSSSASSLS (530 aa)) are 5 X 20 AA approximate repeat of F-X-V-E-X-T-P-X-C-F-S-R-X-S-S-L-S-S-L-S. Residues 1058 to 1587 (LAAQEGPLSL…SLSSSASSLS (530 aa)) form an interaction with CTNNB1 region. The span at 1069-1084 (RCSSLSSLSSAGRPGP) shows a compositional bias: low complexity. A compositionally biased stretch (acidic residues) spans 1088 to 1101 (GDLDDSDSSLEGLE). Residues 1143-1152 (TPSSSSENYV) show a composition bias toward polar residues. Residues 1150–1169 (NYVQETPLVLSRCSSVSSLG) form repeat 2. Low complexity predominate over residues 1173-1186 (SPSIASSIPSEPCS). Positions 1202 to 1212 (PGQTMPPSRSK) are enriched in polar residues. Repeat 3 spans residues 1263–1282 (FTVEKPDENFSCASSLSALA). Disordered regions lie at residues 1307–1335 (GAGGAGLHFAGHRRREEGPAPTGSRPRGA), 1382–1497 (PAQE…QSLC), 1510–1684 (YGND…LDSV), 1724–2031 (LSVG…RGRP), and 2046–2232 (LRAA…DVDG). The span at 1390–1410 (TDSAEGTPVNFSSAASLSDET) shows a compositional bias: polar residues. Repeat 4 spans residues 1391–1410 (DSAEGTPVNFSSAASLSDET). 2 stretches are compositionally biased toward basic and acidic residues: residues 1477–1489 (ADKDGSKPGRTRG) and 1537–1548 (FTRERPQGRKEA). The stretch at 1568-1587 (LIADETPPCYSLSSSASSLS) is repeat 5. Over residues 1578–1589 (SLSSSASSLSEP) the composition is skewed to low complexity. 2 positions are modified to phosphoserine: serine 1585 and serine 1587. Basic residues predominate over residues 1638 to 1654 (PRRRPPVSGLRRRKPRA). Basic and acidic residues-rich tracts occupy residues 1655 to 1671 (TRLDERPAEGSRERGEE) and 1739 to 1755 (RQAEGEMGSARRPEKRG). A compositionally biased stretch (low complexity) spans 1819-1830 (APPCLAQPAAPA). The interval 1821-1900 (PCLAQPAAPA…PPVTQAAGAL (80 aa)) is required for localization to microtubules and function in microtubule stabilization. Polar residues predominate over residues 1851 to 1860 (ELATLSQPPR). Composition is skewed to low complexity over residues 1868-1886 (LAKTPSSSSSQTSPASQPL), 1971-1984 (GLVRVASALSSGSE), 2011-2026 (LSSAESAASAPQGASP), 2049-2062 (APRQGPAPARQRPP), and 2113-2123 (GAVPAAPASAD). Residues 2067–2144 (SPGERPARRT…PLPRVAAPGT (78 aa)) are interaction with MAPRE1 and MAPRE3. Positions 2124 to 2135 (AARRSSDGEPRP) are enriched in basic and acidic residues. Residues 2200–2209 (KTNSSTSPSL) show a composition bias toward polar residues.

The protein belongs to the adenomatous polyposis coli (APC) family. In terms of assembly, interacts with PSRC1. Interacts with APC. Interacts with CTNNB1. Interacts with MAPRE1 and MAPRE3. Interacts with TP53BP. Interacts possibly with AXIN2. Widely expressed (at protein level). Specifically expressed in the CNS.

It localises to the cytoplasm. Its subcellular location is the cytoskeleton. It is found in the golgi apparatus. The protein localises to the perinuclear region. Stabilizes microtubules and may regulate actin fiber dynamics through the activation of Rho family GTPases. May also function in Wnt signaling by promoting the rapid degradation of CTNNB1. The chain is Adenomatous polyposis coli protein 2 from Homo sapiens (Human).